An 899-amino-acid polypeptide reads, in one-letter code: 1,4-alpha-glucan-branching enzyme 3, chloroplastic/amyloplastic (899 aa).

The transit peptide at 1–49 (MVSLSNQTRFSFHPNNLVVSEKRRLGISGVNFPRKIKLKITCFAAERPR) directs the protein to the chloroplast. The disordered stretch occupies residues 47-67 (RPRQEKQKKKSQSQSTSDAEA). The active-site Proton donor is the E612.

It belongs to the glycosyl hydrolase 13 family. GlgB subfamily. As to quaternary structure, monomer. In terms of tissue distribution, mostly expressed in flowers and inflorescence, and, to a lower extent, in seedlings, roots, stems, leaves, siliques and seeds.

The protein localises to the plastid. It is found in the chloroplast stroma. It localises to the amyloplast. The catalysed reaction is Transfers a segment of a (1-&gt;4)-alpha-D-glucan chain to a primary hydroxy group in a similar glucan chain.. Its pathway is glycan biosynthesis; starch biosynthesis. Functionally, catalyzes the formation of the alpha-1,6-glucosidic linkages in starch by scission of a 1,4-alpha-linked oligosaccharide from growing alpha-1,4-glucan chains and the subsequent attachment of the oligosaccharide to the alpha-1,6 position. Essential during embryogenesis. In Arabidopsis thaliana (Mouse-ear cress), this protein is 1,4-alpha-glucan-branching enzyme 3, chloroplastic/amyloplastic (SBE3).